Reading from the N-terminus, the 619-residue chain is Serine/threonine-protein kinase pkn1 (619 aa).

In terms of domain architecture, Protein kinase spans 15–302 (YRILYRKGQS…SSQNLPQAVL (288 aa)). An ATP-binding site is contributed by 21-29 (KGQSLWSED). The Proton acceptor role is filled by E141.

Belongs to the protein kinase superfamily. Ser/Thr protein kinase family. In terms of processing, autophosphorylated on serine and threonine residues.

The enzyme catalyses L-seryl-[protein] + ATP = O-phospho-L-seryl-[protein] + ADP + H(+). The catalysed reaction is L-threonyl-[protein] + ATP = O-phospho-L-threonyl-[protein] + ADP + H(+). Together with the serine/threonine kinase PknD, may play a role in the specific interactions with host proteins during intracellular growth. This is Serine/threonine-protein kinase pkn1 (pkn1) from Chlamydia pneumoniae (Chlamydophila pneumoniae).